Consider the following 466-residue polypeptide: Xanthine permease XanQ (466 aa).

Residues 1–44 are Cytoplasmic-facing; that stretch reads MSDINHAGSDLIFELEDRPPFHQALVGAITHLLAIFVPMVTPAL. A helical transmembrane segment spans residues 45-65; that stretch reads IVGAALQLSAETTAYLVSMAM. At 66 to 74 the chain is on the periplasmic side; sequence IASGIGTWL. The helical transmembrane segment at 75–95 threads the bilayer; that stretch reads QVNRYGIVGSGLLSIQSVNFS. Residues 96–99 are Cytoplasmic-facing; sequence FVTV. Residues 100-120 form a helical membrane-spanning segment; the sequence is MIALGSSMKSDGFHEELIMSS. The Periplasmic portion of the chain corresponds to 121-139; that stretch reads LLGVSFVGAFLVVGSSFIL. The helical transmembrane segment at 140–160 threads the bilayer; that stretch reads PYLRRVITPTVSGIVVLMIGL. Residues 161–170 lie on the Cytoplasmic side of the membrane; the sequence is SLIKVGIIDF. The chain crosses the membrane as a helical span at residues 171 to 191; sequence GGGFAAKSSGTFGNYEHLGVG. Over 192-199 the chain is Periplasmic; the sequence is LLVLIVVI. A helical transmembrane segment spans residues 200-220; sequence GFNCCRSPLLRMGGIAIGLCV. Residues 221–229 are Cytoplasmic-facing; the sequence is GYIASLCLG. A helical transmembrane segment spans residues 230–250; the sequence is MVDFSSMRNLPLITIPHPFKY. Residues 251 to 277 lie on the Periplasmic side of the membrane; that stretch reads GFSFSFHQFLVVGTIYLLSVLEAVGDI. A helical transmembrane segment spans residues 278-298; sequence TATAMVSRRPIQGEEYQSRLK. Topologically, residues 299–317 are cytoplasmic; sequence GGVLADGLVSVIASAVGSL. A helical membrane pass occupies residues 318 to 338; sequence PLTTFAQNNGVIQMTGVASRY. Residues 339-361 lie on the Periplasmic side of the membrane; the sequence is VGRTIAVMLVILGLFPMIGGFFT. The chain crosses the membrane as a helical span at residues 362-382; sequence TIPSAVLGGAMTLMFSMIAIA. A topological domain (cytoplasmic) is located at residue G383. A helical membrane pass occupies residues 384–403; sequence IRIIITNGLKRRETLIVATS. Residues 404–444 lie on the Periplasmic side of the membrane; the sequence is LGLGLGVSYDPEIFKILPASIYVLVENPICAGGLTAILLNI. Residues 445-465 traverse the membrane as a helical segment; that stretch reads ILPGGYRQENVLPGITSAEEM. A topological domain (cytoplasmic) is located at residue D466.

It belongs to the nucleobase:cation symporter-2 (NCS2) (TC 2.A.40) family.

Its subcellular location is the cell inner membrane. It catalyses the reaction xanthine(in) + H(+)(in) = xanthine(out) + H(+)(out). In terms of biological role, specific, proton motive force-dependent high-affinity transporter for xanthine. The protein is Xanthine permease XanQ (xanQ) of Escherichia coli O157:H7.